The sequence spans 82 residues: Small ribosomal subunit protein bS16 (82 aa).

Belongs to the bacterial ribosomal protein bS16 family.

The sequence is that of Small ribosomal subunit protein bS16 from Mannheimia succiniciproducens (strain KCTC 0769BP / MBEL55E).